The chain runs to 328 residues: MSYRELIFTVAAETAEPLGDALLDLGALSVTVEDDAAGGYDENPLYEEPGLSPEVQAWDRSAVTALFNPEIDTSGSAEFIPELLASLKEVGFNLAPPQEKTIEEQDWVRLTQSQFSPIQIGERIWVVPSWHDAPNDPNAICLAVDPGLAFGTGSHPTTHLCLLWLEQQSHLKNQSLLDYGCGSGILAIAAAKLGCNPVIGTDIDPQAMVAARSNADINHTAVTFVLPNEGATELAAETKYDIVMANILANPLQVLAPALVNKMKLGGRIVLSGVLARQAEEVIATYSQWLTPSVWKESEGWVCLHGTLNQDKQNTASTVFAAPAQKKF.

4 residues coordinate S-adenosyl-L-methionine: threonine 158, glycine 180, aspartate 202, and asparagine 246.

This sequence belongs to the methyltransferase superfamily. PrmA family.

The protein localises to the cytoplasm. The catalysed reaction is L-lysyl-[protein] + 3 S-adenosyl-L-methionine = N(6),N(6),N(6)-trimethyl-L-lysyl-[protein] + 3 S-adenosyl-L-homocysteine + 3 H(+). In terms of biological role, methylates ribosomal protein L11. This Polynucleobacter necessarius subsp. necessarius (strain STIR1) protein is Ribosomal protein L11 methyltransferase.